A 302-amino-acid chain; its full sequence is Vacuolar protein sorting-associated protein 26A (302 aa).

The protein belongs to the VPS26 family. Component of the retromer complex which consists of VPS29 (MAG1), VPS26 (VPS26A or VPS26B), VPS35 (VPS35A or VPS35B or VPS35C), VPS5/17 (SNX1 or SNX2A or SNX2B). Component of a retromer subcomplex consisting of VPS29 (MAG1), VPS26 (VPS26A or VPS26B), VPS35 (VPS35A or VPS35B or VPS35C).

It is found in the cytoplasm. The protein localises to the endosome membrane. Its subcellular location is the prevacuolar compartment membrane. The protein resides in the golgi apparatus. It localises to the trans-Golgi network membrane. In terms of biological role, plays a role in vesicular protein sorting. Component of the membrane-associated retromer complex which is essential in endosome-to-Golgi retrograde transport. The VPS29-VPS26-VPS35 subcomplex may be involved in recycling of specific cargos from endosome to the plasma membrane. The protein is Vacuolar protein sorting-associated protein 26A (VPS26A) of Arabidopsis thaliana (Mouse-ear cress).